A 1339-amino-acid polypeptide reads, in one-letter code: Receptor tyrosine-protein kinase erbB-3 (1339 aa).

A signal peptide spans 1–19; it reads MSAIGTLQVLGFLLSLARG. The Extracellular segment spans residues 20–641; it reads SEMGNSQAVC…QAEVLMSKPH (622 aa). Asn-126 is a glycosylation site (N-linked (GlcNAc...) asparagine). 11 cysteine pairs are disulfide-bonded: Cys-186–Cys-194, Cys-190–Cys-202, Cys-210–Cys-218, Cys-214–Cys-226, Cys-227–Cys-235, Cys-231–Cys-243, Cys-246–Cys-255, Cys-259–Cys-286, Cys-290–Cys-301, Cys-305–Cys-320, and Cys-323–Cys-327. Asn-250 carries an N-linked (GlcNAc...) asparagine glycan. 5 N-linked (GlcNAc...) asparagine glycosylation sites follow: Asn-353, Asn-408, Asn-414, Asn-437, and Asn-469. Intrachain disulfides connect Cys-500–Cys-509, Cys-504–Cys-517, Cys-520–Cys-529, Cys-533–Cys-549, Cys-552–Cys-565, Cys-556–Cys-573, Cys-576–Cys-585, Cys-589–Cys-610, Cys-613–Cys-621, and Cys-617–Cys-629. Asn-522 is a glycosylation site (N-linked (GlcNAc...) asparagine). Residue Asn-566 is glycosylated (N-linked (GlcNAc...) asparagine). The N-linked (GlcNAc...) asparagine glycan is linked to Asn-616. The chain crosses the membrane as a helical span at residues 642–662; the sequence is LVIAVTVGLTVIFLILGGSFL. The Cytoplasmic portion of the chain corresponds to 663–1339; that stretch reads YWRGRRIQNK…LFPKANAQRI (677 aa). Ser-684 bears the Phosphoserine mark. Residues 707 to 964 enclose the Protein kinase domain; sequence LRKLKVLGSG…TFKELANEFT (258 aa). ATP contacts are provided by residues 713–721, Lys-740, 786–788, and 832–837; these read LGSGVFGTV, QYL, and DLALRN. Catalysis depends on Asp-832, which acts as the Proton acceptor. Position 980 is a phosphoserine (Ser-980). Disordered regions lie at residues 1028 to 1052, 1077 to 1156, and 1181 to 1212; these read LSLP…SGYM, RPIS…GNGY, and SVLG…PRPG. Residues 1185 to 1195 show a composition bias toward acidic residues; that stretch reads TEEEDEDEEYE.

It belongs to the protein kinase superfamily. Tyr protein kinase family. EGF receptor subfamily. In terms of assembly, monomer and homodimer. Heterodimer with each of the other ERBB receptors (Potential). Interacts with CSPG5, PA2G4, GRB7 and MUC1. Interacts with MYOC. Found in a ternary complex with NRG1 and ITGAV:ITGB3 or ITGA6:ITGB4. Autophosphorylated. Ligand-binding increases phosphorylation on tyrosine residues and promotes its association with the p85 subunit of phosphatidylinositol 3-kinase. As to expression, in the muscle, expression localizes to the synaptic sites of muscle fibers.

It is found in the membrane. It carries out the reaction L-tyrosyl-[protein] + ATP = O-phospho-L-tyrosyl-[protein] + ADP + H(+). Its function is as follows. Tyrosine-protein kinase that plays an essential role as cell surface receptor for neuregulins. Binds to neuregulin-1 (NRG1) and is activated by it; ligand-binding increases phosphorylation on tyrosine residues and promotes its association with the p85 subunit of phosphatidylinositol 3-kinase. May also be activated by CSPG5. Involved in the regulation of myeloid cell differentiation. The protein is Receptor tyrosine-protein kinase erbB-3 (Erbb3) of Mus musculus (Mouse).